A 508-amino-acid chain; its full sequence is Bifunctional purine biosynthesis protein PurH (508 aa).

The 145-residue stretch at 1–145 (MTKRALISVS…KNHQYVTVIV (145 aa)) folds into the MGS-like domain.

It belongs to the PurH family.

The enzyme catalyses (6R)-10-formyltetrahydrofolate + 5-amino-1-(5-phospho-beta-D-ribosyl)imidazole-4-carboxamide = 5-formamido-1-(5-phospho-D-ribosyl)imidazole-4-carboxamide + (6S)-5,6,7,8-tetrahydrofolate. It carries out the reaction IMP + H2O = 5-formamido-1-(5-phospho-D-ribosyl)imidazole-4-carboxamide. It functions in the pathway purine metabolism; IMP biosynthesis via de novo pathway; 5-formamido-1-(5-phospho-D-ribosyl)imidazole-4-carboxamide from 5-amino-1-(5-phospho-D-ribosyl)imidazole-4-carboxamide (10-formyl THF route): step 1/1. It participates in purine metabolism; IMP biosynthesis via de novo pathway; IMP from 5-formamido-1-(5-phospho-D-ribosyl)imidazole-4-carboxamide: step 1/1. The chain is Bifunctional purine biosynthesis protein PurH from Lysinibacillus sphaericus (strain C3-41).